An 81-amino-acid chain; its full sequence is Large ribosomal subunit protein bL28 (81 aa).

It belongs to the bacterial ribosomal protein bL28 family. Part of the 50S ribosomal subunit.

This is Large ribosomal subunit protein bL28 from Deinococcus radiodurans (strain ATCC 13939 / DSM 20539 / JCM 16871 / CCUG 27074 / LMG 4051 / NBRC 15346 / NCIMB 9279 / VKM B-1422 / R1).